A 172-amino-acid polypeptide reads, in one-letter code: Ribosome maturation factor RimM (172 aa).

One can recognise a PRC barrel domain in the interval 92-167 (ENEFYHSDLV…VILKLPEIIG (76 aa)).

This sequence belongs to the RimM family. As to quaternary structure, binds ribosomal protein uS19.

The protein localises to the cytoplasm. Its function is as follows. An accessory protein needed during the final step in the assembly of 30S ribosomal subunit, possibly for assembly of the head region. Essential for efficient processing of 16S rRNA. May be needed both before and after RbfA during the maturation of 16S rRNA. It has affinity for free ribosomal 30S subunits but not for 70S ribosomes. The protein is Ribosome maturation factor RimM of Ehrlichia ruminantium (strain Gardel).